The primary structure comprises 137 residues: Holo-[acyl-carrier-protein] synthase (137 aa).

Residues Asp8 and Glu57 each contribute to the Mg(2+) site.

The protein belongs to the P-Pant transferase superfamily. AcpS family. The cofactor is Mg(2+).

The protein localises to the cytoplasm. It carries out the reaction apo-[ACP] + CoA = holo-[ACP] + adenosine 3',5'-bisphosphate + H(+). Its function is as follows. Transfers the 4'-phosphopantetheine moiety from coenzyme A to a Ser of acyl-carrier-protein. The sequence is that of Holo-[acyl-carrier-protein] synthase from Cereibacter sphaeroides (strain ATCC 17023 / DSM 158 / JCM 6121 / CCUG 31486 / LMG 2827 / NBRC 12203 / NCIMB 8253 / ATH 2.4.1.) (Rhodobacter sphaeroides).